The chain runs to 236 residues: Small ribosomal subunit protein uS2c (236 aa).

It belongs to the universal ribosomal protein uS2 family.

It localises to the plastid. The protein resides in the chloroplast. This chain is Small ribosomal subunit protein uS2c (rps2), found in Saccharum hybrid (Sugarcane).